The chain runs to 338 residues: Ketol-acid reductoisomerase (NADP(+)) (338 aa).

A KARI N-terminal Rossmann domain is found at 1 to 181 (MKVFYDKDCD…GGGRTGIIET (181 aa)). Residues 24-27 (YGSQ), arginine 47, serine 50, threonine 52, and 82-85 (DEFQ) each bind NADP(+). Residue histidine 107 is part of the active site. Residue glycine 133 coordinates NADP(+). One can recognise a KARI C-terminal knotted domain in the interval 182-327 (TFKDETETDL…EQLRSMMPWI (146 aa)). Residues aspartate 190, glutamate 194, glutamate 226, and glutamate 230 each contribute to the Mg(2+) site. Serine 251 provides a ligand contact to substrate.

Belongs to the ketol-acid reductoisomerase family. The cofactor is Mg(2+).

It catalyses the reaction (2R)-2,3-dihydroxy-3-methylbutanoate + NADP(+) = (2S)-2-acetolactate + NADPH + H(+). It carries out the reaction (2R,3R)-2,3-dihydroxy-3-methylpentanoate + NADP(+) = (S)-2-ethyl-2-hydroxy-3-oxobutanoate + NADPH + H(+). Its pathway is amino-acid biosynthesis; L-isoleucine biosynthesis; L-isoleucine from 2-oxobutanoate: step 2/4. The protein operates within amino-acid biosynthesis; L-valine biosynthesis; L-valine from pyruvate: step 2/4. Functionally, involved in the biosynthesis of branched-chain amino acids (BCAA). Catalyzes an alkyl-migration followed by a ketol-acid reduction of (S)-2-acetolactate (S2AL) to yield (R)-2,3-dihydroxy-isovalerate. In the isomerase reaction, S2AL is rearranged via a Mg-dependent methyl migration to produce 3-hydroxy-3-methyl-2-ketobutyrate (HMKB). In the reductase reaction, this 2-ketoacid undergoes a metal-dependent reduction by NADPH to yield (R)-2,3-dihydroxy-isovalerate. This is Ketol-acid reductoisomerase (NADP(+)) from Pseudomonas putida (strain ATCC 700007 / DSM 6899 / JCM 31910 / BCRC 17059 / LMG 24140 / F1).